A 332-amino-acid chain; its full sequence is Beta-ketoacyl-[acyl-carrier-protein] synthase III (332 aa).

Residues Cys-116 and His-257 contribute to the active site. An ACP-binding region spans residues 258-262; that stretch reads QANQR. Residue Asn-287 is part of the active site.

Belongs to the thiolase-like superfamily. FabH family. In terms of assembly, homodimer.

The protein resides in the cytoplasm. The enzyme catalyses malonyl-[ACP] + acetyl-CoA + H(+) = 3-oxobutanoyl-[ACP] + CO2 + CoA. Its pathway is lipid metabolism; fatty acid biosynthesis. Functionally, catalyzes the condensation reaction of fatty acid synthesis by the addition to an acyl acceptor of two carbons from malonyl-ACP. Catalyzes the first condensation reaction which initiates fatty acid synthesis and may therefore play a role in governing the total rate of fatty acid production. Possesses both acetoacetyl-ACP synthase and acetyl transacylase activities. Its substrate specificity determines the biosynthesis of branched-chain and/or straight-chain of fatty acids. This is Beta-ketoacyl-[acyl-carrier-protein] synthase III from Acaryochloris marina (strain MBIC 11017).